An 89-amino-acid chain; its full sequence is Small ribosomal subunit protein uS19 (89 aa).

This sequence belongs to the universal ribosomal protein uS19 family.

Functionally, protein S19 forms a complex with S13 that binds strongly to the 16S ribosomal RNA. The sequence is that of Small ribosomal subunit protein uS19 from Ruthia magnifica subsp. Calyptogena magnifica.